The primary structure comprises 345 residues: Meiotic recombination protein rec12 (345 aa).

A Topo IIA-type catalytic domain is found at 5 to 137; sequence DKKKVVRSWI…LNVEASAKGL (133 aa). Tyr98 (O-(5'-phospho-DNA)-tyrosine intermediate) is an active-site residue. 2 residues coordinate Mg(2+): Glu179 and Asp229.

This sequence belongs to the TOP6A family. Component of the DSB catalytic core (DSBC) complex, composed of at least rec12, rec6 and rec14. The complex interacts with mde2. Mg(2+) serves as cofactor.

It is found in the cytoplasm. The protein resides in the nucleus. It carries out the reaction ATP-dependent breakage, passage and rejoining of double-stranded DNA.. Functionally, required for formation of the double-strand breaks (DSBs) that initiate meiotic recombination. Required for crossover recombination and chiasmatic segregation of chromosomes during meiosis I. Also involved in the faithful equational segregation of chromosomes during meiosis II. The protein is Meiotic recombination protein rec12 of Schizosaccharomyces pombe (strain 972 / ATCC 24843) (Fission yeast).